The chain runs to 827 residues: Glycerol-3-phosphate acyltransferase (827 aa).

The HXXXXD motif signature appears at 325-330 (CHRSHM).

This sequence belongs to the GPAT/DAPAT family.

It is found in the cell inner membrane. It catalyses the reaction sn-glycerol 3-phosphate + an acyl-CoA = a 1-acyl-sn-glycero-3-phosphate + CoA. It participates in phospholipid metabolism; CDP-diacylglycerol biosynthesis; CDP-diacylglycerol from sn-glycerol 3-phosphate: step 1/3. The chain is Glycerol-3-phosphate acyltransferase from Shigella dysenteriae serotype 1 (strain Sd197).